A 160-amino-acid polypeptide reads, in one-letter code: Ureidoglycolate lyase (160 aa).

This sequence belongs to the ureidoglycolate lyase family. In terms of assembly, homodimer. It depends on Ni(2+) as a cofactor.

The catalysed reaction is (S)-ureidoglycolate = urea + glyoxylate. The protein operates within nitrogen metabolism; (S)-allantoin degradation. Functionally, catalyzes the catabolism of the allantoin degradation intermediate (S)-ureidoglycolate, generating urea and glyoxylate. Involved in the utilization of allantoin as nitrogen source. The chain is Ureidoglycolate lyase from Salmonella enteritidis.